The chain runs to 605 residues: Ras guanine nucleotide exchange factor A (605 aa).

The LisH domain occupies 67–99 (DKTAIIQLILQHLSTKGLKQTKQTLEKEARTTT). The region spanning 198–320 (DDEVVKFASL…SLTKMVEKLS (123 aa)) is the N-terminal Ras-GEF domain. Residues 353–597 (DEEEIARQLT…YRESLKREPK (245 aa)) enclose the Ras-GEF domain.

As to quaternary structure, component of the Sca1 complex composed of at least gefA, gefH, scaA, phr, and the protein phosphatase 2A subunits pppA and pho2B. Interacts directly with gefH.

It localises to the cell membrane. Functionally, ras-bound GDP/GTP exchange factor required for normal activation of adenylyl cyclase. Component of the Sca1 complex, a regulator of cell motility, chemotaxis and signal relay. The Sca1 complex is recruited to the plasma membrane in a chemoattractant- and F-actin-dependent manner and is enriched at the leading edge of chemotaxing cells where it regulates F-actin dynamics and signal relay by controlling the activation of rasC and the downstream target of rapamycin complex 2 (TORC2)-Akt/protein kinase B (PKB) pathway. The chain is Ras guanine nucleotide exchange factor A (gefA) from Dictyostelium discoideum (Social amoeba).